The sequence spans 288 residues: MAAKIIDGKTIAQQVRLEVAEKVKARVAAGKRAPGLAVVLVGANPASQIYVGSKRKACEEVGFVSRSYDLPETTSEAELLALIDELNADAAIDGILVQLPLPAGIDNVKVLERIAPDKDVDGFHPYNVGRLCQRAPRLRPCTPRGIVTLLERYNIDTYGLNAVVIGASNIVGRPMSMELLLAGCTTTVTHRFTKNLRQHVENADLLIVAVGKPGFIPGEWIKEGAIVIDVGINRLENGKVVGDVVFEEAAKRASYITPVPGGVGPMTVATLIQNTLQACVEYHDGEEA.

NADP(+) contacts are provided by residues 166–168 (GAS) and Ile-232.

It belongs to the tetrahydrofolate dehydrogenase/cyclohydrolase family. In terms of assembly, homodimer.

The enzyme catalyses (6R)-5,10-methylene-5,6,7,8-tetrahydrofolate + NADP(+) = (6R)-5,10-methenyltetrahydrofolate + NADPH. It carries out the reaction (6R)-5,10-methenyltetrahydrofolate + H2O = (6R)-10-formyltetrahydrofolate + H(+). It functions in the pathway one-carbon metabolism; tetrahydrofolate interconversion. Its function is as follows. Catalyzes the oxidation of 5,10-methylenetetrahydrofolate to 5,10-methenyltetrahydrofolate and then the hydrolysis of 5,10-methenyltetrahydrofolate to 10-formyltetrahydrofolate. The polypeptide is Bifunctional protein FolD (Cronobacter sakazakii (strain ATCC BAA-894) (Enterobacter sakazakii)).